We begin with the raw amino-acid sequence, 62 residues long: UPF0434 protein RSc2531 (62 aa).

It belongs to the UPF0434 family.

This is UPF0434 protein RSc2531 from Ralstonia nicotianae (strain ATCC BAA-1114 / GMI1000) (Ralstonia solanacearum).